The sequence spans 283 residues: Thymidylate synthase (283 aa).

DUMP is bound at residue Arg22. Cys160 serves as the catalytic Nucleophile. DUMP-binding positions include 180 to 183, Asn191, and 221 to 223; these read RSCD and HIY. Asp183 provides a ligand contact to (6R)-5,10-methylene-5,6,7,8-tetrahydrofolate. Residue Ala282 participates in (6R)-5,10-methylene-5,6,7,8-tetrahydrofolate binding.

Belongs to the thymidylate synthase family. Bacterial-type ThyA subfamily. In terms of assembly, homodimer.

Its subcellular location is the cytoplasm. It catalyses the reaction dUMP + (6R)-5,10-methylene-5,6,7,8-tetrahydrofolate = 7,8-dihydrofolate + dTMP. It functions in the pathway pyrimidine metabolism; dTTP biosynthesis. In terms of biological role, catalyzes the reductive methylation of 2'-deoxyuridine-5'-monophosphate (dUMP) to 2'-deoxythymidine-5'-monophosphate (dTMP) while utilizing 5,10-methylenetetrahydrofolate (mTHF) as the methyl donor and reductant in the reaction, yielding dihydrofolate (DHF) as a by-product. This enzymatic reaction provides an intracellular de novo source of dTMP, an essential precursor for DNA biosynthesis. This Idiomarina loihiensis (strain ATCC BAA-735 / DSM 15497 / L2-TR) protein is Thymidylate synthase.